We begin with the raw amino-acid sequence, 113 residues long: Small ribosomal subunit protein bS6 (113 aa).

It belongs to the bacterial ribosomal protein bS6 family.

Binds together with bS18 to 16S ribosomal RNA. The polypeptide is Small ribosomal subunit protein bS6 (Ruthia magnifica subsp. Calyptogena magnifica).